The sequence spans 380 residues: Succinyl-diaminopimelate desuccinylase (380 aa).

His69 is a binding site for Zn(2+). Asp71 is an active-site residue. Asp102 serves as a coordination point for Zn(2+). Glu135 serves as the catalytic Proton acceptor. Residues Glu136, Glu164, and His353 each contribute to the Zn(2+) site.

It belongs to the peptidase M20A family. DapE subfamily. Homodimer. The cofactor is Zn(2+). Co(2+) serves as cofactor.

It catalyses the reaction N-succinyl-(2S,6S)-2,6-diaminopimelate + H2O = (2S,6S)-2,6-diaminopimelate + succinate. Its pathway is amino-acid biosynthesis; L-lysine biosynthesis via DAP pathway; LL-2,6-diaminopimelate from (S)-tetrahydrodipicolinate (succinylase route): step 3/3. Functionally, catalyzes the hydrolysis of N-succinyl-L,L-diaminopimelic acid (SDAP), forming succinate and LL-2,6-diaminopimelate (DAP), an intermediate involved in the bacterial biosynthesis of lysine and meso-diaminopimelic acid, an essential component of bacterial cell walls. The polypeptide is Succinyl-diaminopimelate desuccinylase (Cereibacter sphaeroides (strain ATCC 17023 / DSM 158 / JCM 6121 / CCUG 31486 / LMG 2827 / NBRC 12203 / NCIMB 8253 / ATH 2.4.1.) (Rhodobacter sphaeroides)).